Reading from the N-terminus, the 331-residue chain is Ketol-acid reductoisomerase (NADP(+)) (331 aa).

The KARI N-terminal Rossmann domain occupies 2 to 182; it reads ARMYYDADAN…GGTRAGILET (181 aa). NADP(+) is bound by residues 25-28, Ser51, Ser53, and 83-86; these read YGSQ and DEVQ. The active site involves His108. Gly134 is an NADP(+) binding site. One can recognise a KARI C-terminal knotted domain in the interval 183-328; it reads SFREETETDL…KDLRAMFSWL (146 aa). Mg(2+)-binding residues include Asp191, Glu195, Glu227, and Glu231. Ser252 lines the substrate pocket.

This sequence belongs to the ketol-acid reductoisomerase family. It depends on Mg(2+) as a cofactor.

It catalyses the reaction (2R)-2,3-dihydroxy-3-methylbutanoate + NADP(+) = (2S)-2-acetolactate + NADPH + H(+). It carries out the reaction (2R,3R)-2,3-dihydroxy-3-methylpentanoate + NADP(+) = (S)-2-ethyl-2-hydroxy-3-oxobutanoate + NADPH + H(+). It functions in the pathway amino-acid biosynthesis; L-isoleucine biosynthesis; L-isoleucine from 2-oxobutanoate: step 2/4. The protein operates within amino-acid biosynthesis; L-valine biosynthesis; L-valine from pyruvate: step 2/4. In terms of biological role, involved in the biosynthesis of branched-chain amino acids (BCAA). Catalyzes an alkyl-migration followed by a ketol-acid reduction of (S)-2-acetolactate (S2AL) to yield (R)-2,3-dihydroxy-isovalerate. In the isomerase reaction, S2AL is rearranged via a Mg-dependent methyl migration to produce 3-hydroxy-3-methyl-2-ketobutyrate (HMKB). In the reductase reaction, this 2-ketoacid undergoes a metal-dependent reduction by NADPH to yield (R)-2,3-dihydroxy-isovalerate. This Crocosphaera subtropica (strain ATCC 51142 / BH68) (Cyanothece sp. (strain ATCC 51142)) protein is Ketol-acid reductoisomerase (NADP(+)).